Consider the following 215-residue polypeptide: Leucyl/phenylalanyl-tRNA--protein transferase (215 aa).

Belongs to the L/F-transferase family.

It is found in the cytoplasm. The enzyme catalyses N-terminal L-lysyl-[protein] + L-leucyl-tRNA(Leu) = N-terminal L-leucyl-L-lysyl-[protein] + tRNA(Leu) + H(+). It catalyses the reaction N-terminal L-arginyl-[protein] + L-leucyl-tRNA(Leu) = N-terminal L-leucyl-L-arginyl-[protein] + tRNA(Leu) + H(+). It carries out the reaction L-phenylalanyl-tRNA(Phe) + an N-terminal L-alpha-aminoacyl-[protein] = an N-terminal L-phenylalanyl-L-alpha-aminoacyl-[protein] + tRNA(Phe). In terms of biological role, functions in the N-end rule pathway of protein degradation where it conjugates Leu, Phe and, less efficiently, Met from aminoacyl-tRNAs to the N-termini of proteins containing an N-terminal arginine or lysine. This Campylobacter jejuni subsp. doylei (strain ATCC BAA-1458 / RM4099 / 269.97) protein is Leucyl/phenylalanyl-tRNA--protein transferase.